A 97-amino-acid chain; its full sequence is Cell division topological specificity factor (97 aa).

It belongs to the MinE family.

Functionally, prevents the cell division inhibition by proteins MinC and MinD at internal division sites while permitting inhibition at polar sites. This ensures cell division at the proper site by restricting the formation of a division septum at the midpoint of the long axis of the cell. This is Cell division topological specificity factor from Rhodospirillum centenum (strain ATCC 51521 / SW).